The primary structure comprises 257 residues: Transcription factor GHD7 (257 aa).

A Phosphoserine; by CK1 modification is found at Ser-68. Residues 190-232 enclose the CCT domain; the sequence is REAKLMRYKEKRKKRCYEKQIRYASRKAYAEMRPRVRGRFAKE. A Nuclear localization signal motif is present at residues 198 to 204; the sequence is KEKRKKR. A disordered region spans residues 226–245; the sequence is RGRFAKEPDQEAVAPPSTYV.

As to quaternary structure, interacts with HD16/EL1. Post-translationally, phosphorylated at Ser-68 by HD16/EL1, a casein kinase 1. Expressed in the apical meristem, developing leaves, leaf sheaths of young seedling, root meristem, epidermal layer of developing stems and branch-primordia of developing panicles.

It is found in the nucleus. Functionally, probable transcription factor involved in the regulation of flowering time under long day (LD) conditions. Plays a major role as repressor of flowering. Controls flowering time by negatively regulating the expression of EHD1 and HD3A. The chain is Transcription factor GHD7 from Oryza sativa subsp. japonica (Rice).